We begin with the raw amino-acid sequence, 386 residues long: Putative 8-amino-7-oxononanoate synthase (386 aa).

A substrate-binding site is contributed by Arg-26. 113 to 114 (GY) provides a ligand contact to pyridoxal 5'-phosphate. His-138 is a substrate binding site. Residues Ser-186, 211–214 (DDAH), and 240–243 (TLSK) contribute to the pyridoxal 5'-phosphate site. Residue Lys-243 is modified to N6-(pyridoxal phosphate)lysine. Thr-352 serves as a coordination point for substrate.

Belongs to the class-II pyridoxal-phosphate-dependent aminotransferase family. BioF subfamily. In terms of assembly, homodimer. The cofactor is pyridoxal 5'-phosphate.

It carries out the reaction 6-carboxyhexanoyl-[ACP] + L-alanine + H(+) = (8S)-8-amino-7-oxononanoate + holo-[ACP] + CO2. The protein operates within cofactor biosynthesis; biotin biosynthesis. In terms of biological role, catalyzes the decarboxylative condensation of pimeloyl-[acyl-carrier protein] and L-alanine to produce 8-amino-7-oxononanoate (AON), [acyl-carrier protein], and carbon dioxide. The sequence is that of Putative 8-amino-7-oxononanoate synthase (bioF) from Phenylobacterium zucineum (strain HLK1).